Here is a 412-residue protein sequence, read N- to C-terminus: Multifunctional CCA protein (412 aa).

2 residues coordinate ATP: Gly-8 and Arg-11. 2 residues coordinate CTP: Gly-8 and Arg-11. Mg(2+)-binding residues include Asp-21 and Asp-23. 3 residues coordinate ATP: Arg-91, Arg-137, and Arg-140. CTP contacts are provided by Arg-91, Arg-137, and Arg-140. The HD domain occupies 228–329 (TGIHTLMTLS…VKLFDSIDAW (102 aa)).

The protein belongs to the tRNA nucleotidyltransferase/poly(A) polymerase family. Bacterial CCA-adding enzyme type 1 subfamily. In terms of assembly, monomer. Can also form homodimers and oligomers. Mg(2+) serves as cofactor. Ni(2+) is required as a cofactor.

The enzyme catalyses a tRNA precursor + 2 CTP + ATP = a tRNA with a 3' CCA end + 3 diphosphate. It carries out the reaction a tRNA with a 3' CCA end + 2 CTP + ATP = a tRNA with a 3' CCACCA end + 3 diphosphate. In terms of biological role, catalyzes the addition and repair of the essential 3'-terminal CCA sequence in tRNAs without using a nucleic acid template. Adds these three nucleotides in the order of C, C, and A to the tRNA nucleotide-73, using CTP and ATP as substrates and producing inorganic pyrophosphate. tRNA 3'-terminal CCA addition is required both for tRNA processing and repair. Also involved in tRNA surveillance by mediating tandem CCA addition to generate a CCACCA at the 3' terminus of unstable tRNAs. While stable tRNAs receive only 3'-terminal CCA, unstable tRNAs are marked with CCACCA and rapidly degraded. The sequence is that of Multifunctional CCA protein from Shigella flexneri.